We begin with the raw amino-acid sequence, 139 residues long: Transcription antitermination protein NusB (139 aa).

Belongs to the NusB family.

In terms of biological role, involved in transcription antitermination. Required for transcription of ribosomal RNA (rRNA) genes. Binds specifically to the boxA antiterminator sequence of the ribosomal RNA (rrn) operons. The sequence is that of Transcription antitermination protein NusB from Enterobacter sp. (strain 638).